Here is a 182-residue protein sequence, read N- to C-terminus: Heat shock protein beta-2 (182 aa).

Residues 55–163 (RAGEGGRAGA…DTEVNEVYIS (109 aa)) enclose the sHSP domain.

This sequence belongs to the small heat shock protein (HSP20) family. As to quaternary structure, interacts with DMPK; may enhance its kinase activity.

Its subcellular location is the cytoplasm. It localises to the nucleus. In terms of biological role, may regulate the kinase DMPK. In Rattus norvegicus (Rat), this protein is Heat shock protein beta-2 (Hspb2).